Consider the following 255-residue polypeptide: Type III pantothenate kinase (255 aa).

6–13 provides a ligand contact to ATP; sequence DVGNTNIV. Substrate contacts are provided by residues Tyr-100 and 107–110; that span reads GADR. Asp-109 functions as the Proton acceptor in the catalytic mechanism. Asp-129 contributes to the K(+) binding site. Position 132 (Thr-132) interacts with ATP. A substrate-binding site is contributed by Thr-184.

The protein belongs to the type III pantothenate kinase family. In terms of assembly, homodimer. It depends on NH4(+) as a cofactor. The cofactor is K(+).

The protein resides in the cytoplasm. The catalysed reaction is (R)-pantothenate + ATP = (R)-4'-phosphopantothenate + ADP + H(+). The protein operates within cofactor biosynthesis; coenzyme A biosynthesis; CoA from (R)-pantothenate: step 1/5. Its function is as follows. Catalyzes the phosphorylation of pantothenate (Pan), the first step in CoA biosynthesis. The protein is Type III pantothenate kinase of Thermoanaerobacter sp. (strain X514).